The sequence spans 103 residues: Small ribosomal subunit protein uS10 (103 aa).

Belongs to the universal ribosomal protein uS10 family. In terms of assembly, part of the 30S ribosomal subunit.

Involved in the binding of tRNA to the ribosomes. The chain is Small ribosomal subunit protein uS10 from Neisseria gonorrhoeae (strain ATCC 700825 / FA 1090).